The sequence spans 283 residues: MTVQTSKNPQVDIAEDNAFFPSEYSLSQYTSPVSDLDGVDYPKPYRGKHKILVIAADERYLPTDNGKLFSTGNHPIETLLPLYHLHAAGFEFEVATISGLMTKFEYWAMPHKDEKVMPFFEQHKSLFRNPKKLADVVASLNADSEYAAIFVPGGHGALIGLPESQDVAAALQWAIKNDRFVISLCHGPAAFLALRHSDNPLNGYSICAFPDAADKQTPDIGYMPGHLTWYFGEELKKMGMNIINDDITGRVHKDRKLLTGDSPFAANALGKLAAQEMLAAYAS.

Residues histidine 86, glutamate 91, and histidine 123 each coordinate Zn(2+). Cysteine 185 functions as the Nucleophile in the catalytic mechanism.

The protein belongs to the peptidase C56 family. HchA subfamily. Homodimer.

The protein resides in the cytoplasm. The enzyme catalyses N(omega)-(1-hydroxy-2-oxopropyl)-L-arginyl-[protein] + H2O = lactate + L-arginyl-[protein] + H(+). The catalysed reaction is N(6)-(1-hydroxy-2-oxopropyl)-L-lysyl-[protein] + H2O = lactate + L-lysyl-[protein] + H(+). It carries out the reaction S-(1-hydroxy-2-oxopropyl)-L-cysteinyl-[protein] + H2O = lactate + L-cysteinyl-[protein] + H(+). It catalyses the reaction N(omega)-(1-hydroxy-2-oxoethyl)-L-arginyl-[protein] + H2O = L-arginyl-[protein] + glycolate + H(+). The enzyme catalyses N(6)-(1-hydroxy-2-oxoethyl)-L-lysyl-[protein] + H2O = glycolate + L-lysyl-[protein] + H(+). The catalysed reaction is S-(1-hydroxy-2-oxoethyl)-L-cysteinyl-[protein] + H2O = glycolate + L-cysteinyl-[protein] + H(+). It carries out the reaction N(2)-(1-hydroxy-2-oxopropyl)-dGTP + H2O = lactate + dGTP + H(+). It catalyses the reaction N(2)-(1-hydroxy-2-oxopropyl)-GTP + H2O = lactate + GTP + H(+). The enzyme catalyses N(2)-(1-hydroxy-2-oxopropyl)-GDP + H2O = lactate + GDP + H(+). The catalysed reaction is N(2)-(1-hydroxy-2-oxopropyl)-GMP + H2O = lactate + GMP + H(+). It carries out the reaction N(2)-(1-hydroxy-2-oxoethyl)-dGTP + H2O = dGTP + glycolate + H(+). It catalyses the reaction N(2)-(1-hydroxy-2-oxoethyl)-GTP + H2O = glycolate + GTP + H(+). The enzyme catalyses N(2)-(1-hydroxy-2-oxoethyl)-GDP + H2O = glycolate + GDP + H(+). The catalysed reaction is N(2)-(1-hydroxy-2-oxoethyl)-GMP + H2O = glycolate + GMP + H(+). It carries out the reaction an N(2)-(1-hydroxy-2-oxopropyl)-guanosine in RNA + H2O = a guanosine in RNA + lactate + H(+). It catalyses the reaction an N(2)-(1-hydroxy-2-oxopropyl)-2'-deoxyguanosine in DNA + H2O = a 2'-deoxyguanosine in DNA + lactate + H(+). The enzyme catalyses an N(2)-(1-hydroxy-2-oxoethyl)-guanosine in RNA + H2O = a guanosine in RNA + glycolate + H(+). The catalysed reaction is an N(2)-(1-hydroxy-2-oxoethyl)-2'-deoxyguanosine in DNA + H2O = a 2'-deoxyguanosine in DNA + glycolate + H(+). Protein and nucleotide deglycase that catalyzes the deglycation of the Maillard adducts formed between amino groups of proteins or nucleotides and reactive carbonyl groups of glyoxals. Thus, functions as a protein deglycase that repairs methylglyoxal- and glyoxal-glycated proteins, and releases repaired proteins and lactate or glycolate, respectively. Deglycates cysteine, arginine and lysine residues in proteins, and thus reactivates these proteins by reversing glycation by glyoxals. Acts on early glycation intermediates (hemithioacetals and aminocarbinols), preventing the formation of Schiff bases and advanced glycation endproducts (AGE). Also functions as a nucleotide deglycase able to repair glycated guanine in the free nucleotide pool (GTP, GDP, GMP, dGTP) and in DNA and RNA. Is thus involved in a major nucleotide repair system named guanine glycation repair (GG repair), dedicated to reversing methylglyoxal and glyoxal damage via nucleotide sanitization and direct nucleic acid repair. Plays an important role in protecting cells from carbonyl stress. The polypeptide is Protein/nucleic acid deglycase HchA (Escherichia coli O7:K1 (strain IAI39 / ExPEC)).